The sequence spans 176 residues: Ribosome maturation factor RimM (176 aa).

Positions 101 to 170 (EGEYFESDLI…RITVELPEGL (70 aa)) constitute a PRC barrel domain.

It belongs to the RimM family. As to quaternary structure, binds ribosomal protein uS19.

It localises to the cytoplasm. Functionally, an accessory protein needed during the final step in the assembly of 30S ribosomal subunit, possibly for assembly of the head region. Essential for efficient processing of 16S rRNA. May be needed both before and after RbfA during the maturation of 16S rRNA. It has affinity for free ribosomal 30S subunits but not for 70S ribosomes. This chain is Ribosome maturation factor RimM, found in Solibacter usitatus (strain Ellin6076).